The sequence spans 226 residues: RNA pyrophosphohydrolase (226 aa).

Positions 6–149 constitute a Nudix hydrolase domain; sequence GFRPNVGIIL…KRGVYEMALT (144 aa). The Nudix box motif lies at 38-59; sequence GGIDRGETPEQAMFRELHEEVG. A disordered region spans residues 197 to 226; it reads MELPPGASFDPDPRTGDGDPGMPGIHKPAG.

The protein belongs to the Nudix hydrolase family. RppH subfamily. A divalent metal cation is required as a cofactor.

Functionally, accelerates the degradation of transcripts by removing pyrophosphate from the 5'-end of triphosphorylated RNA, leading to a more labile monophosphorylated state that can stimulate subsequent ribonuclease cleavage. The protein is RNA pyrophosphohydrolase of Paracidovorax citrulli (strain AAC00-1) (Acidovorax citrulli).